The following is a 358-amino-acid chain: Peptide chain release factor 1 (358 aa).

The residue at position 236 (Gln236) is an N5-methylglutamine.

This sequence belongs to the prokaryotic/mitochondrial release factor family. Post-translationally, methylated by PrmC. Methylation increases the termination efficiency of RF1.

The protein localises to the cytoplasm. Functionally, peptide chain release factor 1 directs the termination of translation in response to the peptide chain termination codons UAG and UAA. The chain is Peptide chain release factor 1 from Corynebacterium efficiens (strain DSM 44549 / YS-314 / AJ 12310 / JCM 11189 / NBRC 100395).